The chain runs to 682 residues: ATP-dependent zinc metalloprotease FtsH (682 aa).

Topologically, residues 1–7 (MKQSHKT) are cytoplasmic. The chain crosses the membrane as a helical span at residues 8–28 (ILLWALLIFLFVMIYNLISDG). Residues 29-138 (TSGEETLDTT…YEVKAKEEST (110 aa)) lie on the Periplasmic side of the membrane. The chain crosses the membrane as a helical span at residues 139–159 (FWQSLLISWLPMLLLFALFFF). The Cytoplasmic portion of the chain corresponds to 160-682 (FMRQLQAGGG…SGTDPEPEPA (523 aa)). Position 232–239 (232–239 (GPPGTGKT)) interacts with ATP. His-454 is a Zn(2+) binding site. Residue Glu-455 is part of the active site. Positions 458 and 531 each coordinate Zn(2+). A disordered region spans residues 638 to 682 (LSRPAVVSKPSADAESSVDEDEREARPALFPPLGKSGTDPEPEPA).

This sequence in the central section; belongs to the AAA ATPase family. In the C-terminal section; belongs to the peptidase M41 family. In terms of assembly, homohexamer. It depends on Zn(2+) as a cofactor.

Its subcellular location is the cell inner membrane. In terms of biological role, acts as a processive, ATP-dependent zinc metallopeptidase for both cytoplasmic and membrane proteins. Plays a role in the quality control of integral membrane proteins. This chain is ATP-dependent zinc metalloprotease FtsH, found in Haliangium ochraceum (strain DSM 14365 / JCM 11303 / SMP-2).